The primary structure comprises 532 residues: 2,3-bisphosphoglycerate-independent phosphoglycerate mutase (532 aa).

Residues aspartate 15 and serine 65 each coordinate Mn(2+). Catalysis depends on serine 65, which acts as the Phosphoserine intermediate. Residues histidine 126, 156-157 (RD), arginine 188, arginine 194, 258-261 (RPDR), and lysine 331 each bind substrate. Aspartate 398, histidine 402, aspartate 439, histidine 440, and histidine 457 together coordinate Mn(2+).

Belongs to the BPG-independent phosphoglycerate mutase family. In terms of assembly, monomer. The cofactor is Mn(2+).

It carries out the reaction (2R)-2-phosphoglycerate = (2R)-3-phosphoglycerate. It functions in the pathway carbohydrate degradation; glycolysis; pyruvate from D-glyceraldehyde 3-phosphate: step 3/5. Functionally, catalyzes the interconversion of 2-phosphoglycerate and 3-phosphoglycerate. In Synechococcus elongatus (strain ATCC 33912 / PCC 7942 / FACHB-805) (Anacystis nidulans R2), this protein is 2,3-bisphosphoglycerate-independent phosphoglycerate mutase.